Reading from the N-terminus, the 638-residue chain is 1-deoxy-D-xylulose-5-phosphate synthase (638 aa).

Thiamine diphosphate contacts are provided by residues His-79 and 120–122; that span reads GHS. Asp-151 is a Mg(2+) binding site. Residues 152-153, Asn-182, Tyr-291, and Glu-373 each bind thiamine diphosphate; that span reads GA. Asn-182 serves as a coordination point for Mg(2+).

It belongs to the transketolase family. DXPS subfamily. Homodimer. It depends on Mg(2+) as a cofactor. The cofactor is thiamine diphosphate.

The catalysed reaction is D-glyceraldehyde 3-phosphate + pyruvate + H(+) = 1-deoxy-D-xylulose 5-phosphate + CO2. It functions in the pathway metabolic intermediate biosynthesis; 1-deoxy-D-xylulose 5-phosphate biosynthesis; 1-deoxy-D-xylulose 5-phosphate from D-glyceraldehyde 3-phosphate and pyruvate: step 1/1. Its function is as follows. Catalyzes the acyloin condensation reaction between C atoms 2 and 3 of pyruvate and glyceraldehyde 3-phosphate to yield 1-deoxy-D-xylulose-5-phosphate (DXP). The sequence is that of 1-deoxy-D-xylulose-5-phosphate synthase from Xanthomonas euvesicatoria pv. vesicatoria (strain 85-10) (Xanthomonas campestris pv. vesicatoria).